We begin with the raw amino-acid sequence, 242 residues long: N-alpha-acetyltransferase 60 (242 aa).

At 1 to 192 (MTEAVPSSAL…GGHPPWTILD (192 aa)) the chain is on the cytoplasmic side. The N-acetyltransferase domain occupies 13-182 (VSLRLLCHDD…DGFTYVLYIN (170 aa)). A substrate-binding site is contributed by Y38. K79 carries the N6-acetyllysine; by autocatalysis modification. Y97 is a catalytic residue. Substrate is bound at residue L99. Position 101-103 (101-103 (LGV)) interacts with acetyl-CoA. An N6-acetyllysine; by autocatalysis mark is found at K105, K109, and K121. Acetyl-CoA is bound at residue 109–114 (KHGIGS). H138 is a catalytic residue. Acetyl-CoA is bound by residues N143 and 150-153 (YENR). At K156 the chain carries N6-acetyllysine; by autocatalysis. Residues 162 to 173 (PYYYSIRGVLKD) are required for homodimerization. Position 165 (Y165) interacts with substrate. Residues 193 to 236 (YIQHLGSALANLSPCSIPHRIYRQAQSLLCSFLPWSSISTKGGI) constitute an intramembrane region (helical). Residues 237–242 (EYSRTM) lie on the Cytoplasmic side of the membrane.

Belongs to the acetyltransferase family. NAA60 subfamily. Monomer and homodimer; monomer in presence of substrate and homodimer in its absence. In terms of processing, acetylated: autoacetylation is required for optimal acetyltransferase activity.

It localises to the golgi apparatus membrane. The catalysed reaction is N-terminal L-methionyl-[transmembrane protein] + acetyl-CoA = N-terminal N(alpha)-acetyl-L-methionyl-[transmembrane protein] + CoA + H(+). It carries out the reaction L-lysyl-[protein] + acetyl-CoA = N(6)-acetyl-L-lysyl-[protein] + CoA + H(+). Functionally, N-alpha-acetyltransferase that specifically mediates the acetylation of N-terminal residues of the transmembrane proteins, with a strong preference for N-termini facing the cytosol. Displays N-terminal acetyltransferase activity towards a range of N-terminal sequences including those starting with Met-Lys, Met-Val, Met-Ala and Met-Met. Required for normal chromosomal segregation during anaphase. May also show histone acetyltransferase activity; such results are however unclear in vivo and would require additional experimental evidences. The polypeptide is N-alpha-acetyltransferase 60 (NAA60) (Bos taurus (Bovine)).